The following is a 28-amino-acid chain: Dermaseptin-6TR (28 aa).

In terms of tissue distribution, expressed by the skin glands.

The protein resides in the secreted. Functionally, has antimicrobial activity. The polypeptide is Dermaseptin-6TR (Phyllomedusa trinitatis (Trinidad leaf frog)).